Reading from the N-terminus, the 155-residue chain is Endoribonuclease YbeY (155 aa).

The Zn(2+) site is built by H114, H118, and H124.

The protein belongs to the endoribonuclease YbeY family. The cofactor is Zn(2+).

Its subcellular location is the cytoplasm. Single strand-specific metallo-endoribonuclease involved in late-stage 70S ribosome quality control and in maturation of the 3' terminus of the 16S rRNA. The protein is Endoribonuclease YbeY of Escherichia coli O6:K15:H31 (strain 536 / UPEC).